A 76-amino-acid chain; its full sequence is MAVEKFETALKKLEEVVKKLEGGELSLEDSLKAFEEGIKQAAFCSKKLNEAEKRVEVLLKQKDGRFITEQFQPEDE.

Belongs to the XseB family. Heterooligomer composed of large and small subunits.

The protein resides in the cytoplasm. It catalyses the reaction Exonucleolytic cleavage in either 5'- to 3'- or 3'- to 5'-direction to yield nucleoside 5'-phosphates.. Bidirectionally degrades single-stranded DNA into large acid-insoluble oligonucleotides, which are then degraded further into small acid-soluble oligonucleotides. The sequence is that of Exodeoxyribonuclease 7 small subunit from Geotalea daltonii (strain DSM 22248 / JCM 15807 / FRC-32) (Geobacter daltonii).